A 168-amino-acid polypeptide reads, in one-letter code: Peptide methionine sulfoxide reductase 2 (168 aa).

In terms of domain architecture, MsrB spans 40-168 (DVKWNDALTP…NSASLNLKKD (129 aa)). 4 residues coordinate Zn(2+): cysteine 79, cysteine 82, cysteine 128, and cysteine 131. Cysteine 97 and cysteine 157 are disulfide-bonded. The active-site Nucleophile is cysteine 157.

Belongs to the MsrB Met sulfoxide reductase family. Zn(2+) serves as cofactor.

It carries out the reaction L-methionyl-[protein] + [thioredoxin]-disulfide + H2O = L-methionyl-(R)-S-oxide-[protein] + [thioredoxin]-dithiol. Methionine-R-sulfoxide reductase which catalyzes the reduction of methionine sulfoxide (MetSO) to methionine in proteins. Plays a protective role against oxidative stress by restoring activity to proteins that have been inactivated by methionine oxidation. Protects iron-sulfur clusters from oxidative inactivation along with MXR1. Involved in the regulation of lifespan. In Saccharomyces cerevisiae (strain ATCC 204508 / S288c) (Baker's yeast), this protein is Peptide methionine sulfoxide reductase 2 (MXR2).